The chain runs to 297 residues: Formiminotransferase cyclodeaminase-like protein (297 aa).

Residues 2 to 196 are formiminotransferase N-subdomain; that stretch reads LREMLGCCKV…GVVAVGACGW (195 aa). Residue H89 is the For formimidoyltransferase activity of the active site. 178–187 lines the folate pocket; that stretch reads GPQEVSKAKG.

This sequence belongs to the formiminotransferase family. In terms of tissue distribution, expressed constitutively in roots, stems, leaves and flowers.

The protein localises to the golgi apparatus. Its subcellular location is the trans-Golgi network. It carries out the reaction (6S)-5-formyl-5,6,7,8-tetrahydrofolate + L-glutamate = N-formyl-L-glutamate + (6S)-5,6,7,8-tetrahydrofolate + H(+). The enzyme catalyses 5-formimidoyltetrahydrofolate + L-glutamate = N-formimidoyl-L-glutamate + (6S)-5,6,7,8-tetrahydrofolate. It participates in one-carbon metabolism; tetrahydrofolate interconversion. In terms of biological role, involved in the regulation of root growth. May regulate sorting and/or transportation of trans-Golgi network (TGN) vesicles in root cap peripheral cells, thus influencing the extracellular secretion of mucilage components in the root cap. The protein is Formiminotransferase cyclodeaminase-like protein of Arabidopsis thaliana (Mouse-ear cress).